A 510-amino-acid polypeptide reads, in one-letter code: Zinc finger and SCAN domain-containing protein 18 (510 aa).

The tract at residues 1 to 40 is disordered; it reads MLPLEKAFASPRSSPAPPDLPTPGSAAGVQQEEPETIPER. An SCAN box domain is found at 49–131; the sequence is RLRFREFVYQ…SLVEGLADVL (83 aa). Disordered regions lie at residues 172–191, 201–231, 263–413, and 461–510; these read ALGA…SPDP, EAKT…EWGH, TEEL…GKPY, and KTHE…EAQR. 2 stretches are compositionally biased toward basic and acidic residues: residues 214-231 and 263-273; these read QKLK…EWGH and TEELRLVERDP. Positions 288 to 299 are enriched in low complexity; sequence AGCACEEAAPAG. Over residues 344 to 356 the composition is skewed to polar residues; it reads DSATGSQRQSVIQ. 2 C2H2-type zinc fingers span residues 413-435 and 441-463; these read YACG…HSSH and YACQ…QKTH. Low complexity predominate over residues 491–501; it reads GGPPESVEGEA.

Belongs to the krueppel C2H2-type zinc-finger protein family.

Its subcellular location is the nucleus. May be involved in transcriptional regulation. This Homo sapiens (Human) protein is Zinc finger and SCAN domain-containing protein 18 (ZSCAN18).